A 169-amino-acid chain; its full sequence is Putative phosphoesterase SE_0715 (169 aa).

The active-site Proton donor is the His34. 2 short sequence motifs (HXTX) span residues 34–37 and 115–118; these read HITI and HFTI. Catalysis depends on His115, which acts as the Proton acceptor.

It belongs to the 2H phosphoesterase superfamily. YjcG family.

This is Putative phosphoesterase SE_0715 from Staphylococcus epidermidis (strain ATCC 12228 / FDA PCI 1200).